Here is a 553-residue protein sequence, read N- to C-terminus: Putative transport protein YidE (553 aa).

The next 5 helical transmembrane spans lie at 4–24, 28–48, 65–85, 95–115, and 158–178; these read IALTVSILALVAVVGLFIGNV, GVGLGIGGVLFGGIIVGHFVS, FGLILFVYTIGIQVGPGFFAS, LFAVLIVIIGGLVTAILHKLF, and MSYAMAYPFGICGILFTMWML. 2 RCK C-terminal domains span residues 191–276 and 279–361; these read QQHE…VIGQ and DTSL…VLGN. A run of 6 helical transmembrane segments spans residues 371–391, 393–413, 439–459, 464–484, 493–513, and 533–553; these read MLPVFIGIGLGVLLGSIPVFV, GFPAALKLGLAGGPLIMALIL, IVLFLSVVGLKSGGDFIHTLV, LSWIGYGALITAVPLITVGIL, YLTMCGMLAGSMTDPPALAFA, and LVMFLRIITPQLLAVLFWSIG.

The protein belongs to the AAE transporter (TC 2.A.81) family. YidE subfamily.

Its subcellular location is the cell membrane. The protein is Putative transport protein YidE of Escherichia coli O127:H6 (strain E2348/69 / EPEC).